Consider the following 349-residue polypeptide: Aspartate carbamoyltransferase catalytic subunit (349 aa).

Carbamoyl phosphate is bound by residues Arg-59 and Thr-60. Lys-87 contributes to the L-aspartate binding site. Carbamoyl phosphate is bound by residues Arg-109, His-142, and Gln-145. L-aspartate contacts are provided by Arg-182 and Arg-253. Residues Gly-294 and Pro-295 each coordinate carbamoyl phosphate.

This sequence belongs to the aspartate/ornithine carbamoyltransferase superfamily. ATCase family. In terms of assembly, heterododecamer (2C3:3R2) of six catalytic PyrB chains organized as two trimers (C3), and six regulatory PyrI chains organized as three dimers (R2).

The enzyme catalyses carbamoyl phosphate + L-aspartate = N-carbamoyl-L-aspartate + phosphate + H(+). Its pathway is pyrimidine metabolism; UMP biosynthesis via de novo pathway; (S)-dihydroorotate from bicarbonate: step 2/3. Catalyzes the condensation of carbamoyl phosphate and aspartate to form carbamoyl aspartate and inorganic phosphate, the committed step in the de novo pyrimidine nucleotide biosynthesis pathway. This is Aspartate carbamoyltransferase catalytic subunit from Synechococcus sp. (strain CC9605).